Consider the following 464-residue polypeptide: Glutamate decarboxylase beta (464 aa).

K275 carries the post-translational modification N6-(pyridoxal phosphate)lysine.

It belongs to the group II decarboxylase family. It depends on pyridoxal 5'-phosphate as a cofactor.

It carries out the reaction L-glutamate + H(+) = 4-aminobutanoate + CO2. In terms of biological role, converts internalized glutamate to GABA and increases the internal pH. Involved in glutamate-dependent acid resistance in gastric fluid. The chain is Glutamate decarboxylase beta (gadB) from Listeria monocytogenes serovar 1/2a (strain ATCC BAA-679 / EGD-e).